The chain runs to 1412 residues: uncharacterized protein (1412 aa).

A disordered region spans residues 1-22 (MESINVVNSVEDLPGFNPDENV). 2 coiled-coil regions span residues 317 to 377 (NNDF…ILRH) and 732 to 800 (SKEA…SDDE). Residues 778–808 (SRKRKHEDIVKEHEAEKRDSDDEDDFEEVDV) form a disordered region. Residues 783 to 797 (HEDIVKEHEAEKRDS) show a composition bias toward basic and acidic residues. Residues 798–808 (DDEDDFEEVDV) show a composition bias toward acidic residues.

This is an uncharacterized protein from Magallana gigas (Pacific oyster).